The primary structure comprises 229 residues: Probable ribonuclease H (229 aa).

An RNase H type-1 domain is found at 42–164 (LQDISLEFDK…ADFLANSAAK (123 aa)). Residues E60, D87, and D156 each contribute to the a divalent metal cation site.

This sequence belongs to the RNase H family. A divalent metal cation is required as a cofactor.

It carries out the reaction Endonucleolytic cleavage to 5'-phosphomonoester.. In terms of biological role, endonuclease that specifically degrades the RNA of RNA-DNA hybrids. This Acanthamoeba polyphaga mimivirus (APMV) protein is Probable ribonuclease H (RNH1).